Consider the following 467-residue polypeptide: Cytochrome c-552 (467 aa).

Positions 1-27 (MMKKMTGKSFALSALVAASFMAAGAMA) are cleaved as a signal peptide. Residue His87 participates in heme c binding. Positions 115, 118, and 119 each coordinate heme. Heme c is bound by residues Cys153, Cys156, His157, Cys195, Cys198, and His199. Residues Glu201, Tyr202, Lys250, and Gln252 each contribute to the Ca(2+) site. Tyr202 is a substrate binding site. Residue His253 coordinates substrate. His264, Cys271, Cys274, His275, His290, Cys303, Cys306, His307, and His382 together coordinate heme c.

It belongs to the cytochrome c-552 family. The cofactor is Ca(2+). Requires heme c as cofactor.

Its subcellular location is the periplasm. The catalysed reaction is 6 Fe(III)-[cytochrome c] + NH4(+) + 2 H2O = 6 Fe(II)-[cytochrome c] + nitrite + 8 H(+). Its pathway is nitrogen metabolism; nitrate reduction (assimilation). Catalyzes the reduction of nitrite to ammonia, consuming six electrons in the process. This chain is Cytochrome c-552, found in Shewanella sp. (strain W3-18-1).